Here is a 352-residue protein sequence, read N- to C-terminus: Minor capsid protein VP2 (352 aa).

Gly2 carries the N-myristoyl glycine; by host lipid modification. A D1 region spans residues Ser273 to Ser308. A helical transmembrane segment spans residues Thr290–Leu310. The interval Tyr313–Ser352 is disordered. The segment at Tyr313–Ser352 is DNA-binding. The short motif at Gly316 to Leu324 is the Nuclear localization signal element. Residues Arg326–Ser338 are compositionally biased toward polar residues. A compositionally biased stretch (basic residues) spans Lys340–Ser352.

It belongs to the polyomaviruses capsid protein VP2 family. As to quaternary structure, forms homooligomers, and heterooligomers with VP3 in the endoplasmic reticulum membrane. Interacts (via D1 domain) with VP1. In terms of assembly, interacts (via D1 domain) with VP1. Interacts (via C-terminus) with host SP1, this is probably also the case for VP2; this interaction represses SP1 activation of the SV40 early promoter and participates in virion assembly. Interacts (via nuclear localization signal) with host importin alpha2-beta heterodimer. Oligomerizes with VP3 in the nucleus.

Its subcellular location is the virion. It localises to the host nucleus. The protein resides in the host endoplasmic reticulum. The protein localises to the host endoplasmic reticulum membrane. Structural protein that resides within the core of the capsid surrounded by 72 VP1 pentamers. Following virus endocytosis and trafficking to the endoplasmic reticulum, VP2 and VP3 form oligomers and integrate into the endoplasmic reticulum membrane. Heterooligomer VP2-VP3 may create a viroporin for transporting the viral genome across the endoplasmic reticulum membrane to the cytoplasm. Nuclear entry of the viral DNA involves the selective exposure and importin recognition of VP2 or VP3 nuclear localization signal (shared C-terminus). Plays a role in virion assembly within the nucleus in particular through a DNA-binding domain located in the C-terminal region. An N-terminal myristoylation suggests a scaffold function for virion assembly. The viral progenies exit the cells by lytic release. Isoform VP2 may repress SP1 activation of the SV40 early promoter, via specific protein-protein and protein-DNA interactions. Functionally, structural protein that resides within the core of the capsid surrounded by 72 VP1 pentamers. Following virus entry, VP2 and VP3 form oligomers and integrate into the endoplasmic reticulum membrane. Heterooligomer VP2-VP3 may create a viroporin for transporting the viral genome across the endoplasmic reticulum membrane. Essential for focus formation and virus endoplasmic reticulum-to-cytosol membrane transport, required to recruit selective cellular components to the foci in the ER membrane. Nuclear entry of the viral DNA involves the selective exposure and importin recognition of VP2 or VP3 nuclear localization signal (shared C-terminus). Isoform VP3 represses SP1 activation of the SV40 early promoter, via specific protein-protein and protein-DNA interactions. SP1 additionally participates in recruiting VP3 to the SV40 minichromosome during SV40 assembly. Plays a role in virion assembly within the nucleus. May initiate host cell lysis when associated with VP4. Its function is as follows. Viroporin inducing perforation of cellular membranes to trigger virus progeny release. Forms pores of 3 nm inner diameter. VP4 is expressed about 24 hours after the late structural proteins and is not incorporated into the mature virion. The protein is Minor capsid protein VP2 of Simian virus 40 (SV40).